We begin with the raw amino-acid sequence, 1370 residues long: Zinc finger MYM-type protein 3 (1370 aa).

2 stretches are compositionally biased toward low complexity: residues 1–12 (MDPSDFPSPFDP) and 52–61 (PSSGALDLLD). Disordered regions lie at residues 1-72 (MDPS…DPGV) and 90-301 (PSPP…QRAG). The segment covering 230 to 253 (ASEKPPERKRSERVRRAEPPKPEV) has biased composition (basic and acidic residues). Phosphoserine is present on residues S263 and S267. A compositionally biased stretch (acidic residues) spans 263-279 (SDEDSDAMVDDPNDEDF). Glycyl lysine isopeptide (Lys-Gly) (interchain with G-Cter in SUMO2) cross-links involve residues K308, K320, and K328. 9 consecutive MYM-type zinc fingers follow at residues 332–366 (QLFC…TKDS), 378–422 (HEFC…LHEV), 429–464 (HRLC…KTGS), 477–511 (KRFC…FEML), 521–559 (SLFC…PCYY), 567–604 (YQFC…KPEV), 612–646 (FQFC…HEKL), 653–692 (KSFC…GVTE), and 699–733 (WDFC…LETI). Residue S464 is modified to Phosphoserine. The span at 759-794 (NLDTQSGPESLLNSQSPESKPQTPSQTKVENSNTVR) shows a compositional bias: polar residues. Positions 759-830 (NLDTQSGPES…PPPPATPRKN (72 aa)) are disordered. Residues K778 and K786 each participate in a glycyl lysine isopeptide (Lys-Gly) (interchain with G-Cter in SUMO2) cross-link. The residue at position 795 (T795) is a Phosphothreonine. Residue K804 forms a Glycyl lysine isopeptide (Lys-Gly) (interchain with G-Cter in SUMO2) linkage. Residues 815 to 826 (APTPPPPPPPAT) show a composition bias toward pro residues. A phosphothreonine mark is found at T817 and T826. Residues K847, K861, K920, and K1275 each participate in a glycyl lysine isopeptide (Lys-Gly) (interchain with G-Cter in SUMO2) cross-link.

As to quaternary structure, may be a component of a BHC histone deacetylase complex that contains HDAC1, HDAC2, HMG20B/BRAF35, KDM1A, RCOR1/CoREST, PHF21A/BHC80, ZMYM2, ZNF217, ZMYM3, GSE1 and GTF2I. In terms of tissue distribution, most abundant in brain, moderate in muscle and heart, low in other tissues except placenta.

The protein localises to the nucleus. Plays a role in the regulation of cell morphology and cytoskeletal organization. The protein is Zinc finger MYM-type protein 3 (ZMYM3) of Homo sapiens (Human).